A 199-amino-acid chain; its full sequence is DNA dC-&gt;dU-editing enzyme APOBEC-3A (199 aa).

The 117-residue stretch at 27-143 folds into the CMP/dCMP-type deaminase domain; sequence GRHKTYLCYE…PLYKEALQML (117 aa). Position 70 (His70) interacts with Zn(2+). Glu72 (proton donor) is an active-site residue. Cys101 and Cys106 together coordinate Zn(2+).

This sequence belongs to the cytidine and deoxycytidylate deaminase family. As to quaternary structure, interacts with AGO2. Interacts with TRIB3 (via N-terminus). The cofactor is Zn(2+). Expressed in peripheral leukocytes with higher expression in CD14-positive phagocytic cells. Highly expressed in keratinocytes and in periphery blood monocytes. Also detected in non-lymphoid tissues including lung and adipose tissues. Found at high levels in colorectal adenocarcinoma, Burkitt's lymphoma and chronic myelogenous leukemia.

The protein resides in the nucleus. It is found in the cytoplasm. The catalysed reaction is a 2'-deoxycytidine in single-stranded DNA + H2O + H(+) = a 2'-deoxyuridine in single-stranded DNA + NH4(+). Its function is as follows. DNA deaminase (cytidine deaminase) with restriction activity against viruses, foreign DNA and mobility of retrotransposons. Exhibits antiviral activity against adeno-associated virus (AAV) and human T-cell leukemia virus type 1 (HTLV-1) and may inhibit the mobility of LTR and non-LTR retrotransposons. Selectively targets single-stranded DNA and can deaminate both methylcytosine and cytosine in foreign DNA. Can induce somatic hypermutation in the nuclear and mitochondrial DNA. May also play a role in the epigenetic regulation of gene expression through the process of active DNA demethylation. The polypeptide is DNA dC-&gt;dU-editing enzyme APOBEC-3A (APOBEC3A) (Homo sapiens (Human)).